Here is a 589-residue protein sequence, read N- to C-terminus: tRNA (guanine(26)-N(2))-dimethyltransferase 2 (589 aa).

In terms of domain architecture, Trm1 methyltransferase spans 9 to 465 (TVIKEGEAEI…APMEVIWDIM (457 aa)). Residue arginine 36 coordinates S-adenosyl-L-methionine. Positions 51–122 (KQEHEAKSSK…RFAPREPKPP (72 aa)) are disordered. Basic and acidic residues-rich tracts occupy residues 68–81 (VIEK…KEET) and 106–122 (DPAK…PKPP). Residues arginine 134, aspartate 152, and valine 185 each coordinate S-adenosyl-L-methionine. Residues cysteine 315, cysteine 318, cysteine 350, and cysteine 353 each contribute to the Zn(2+) site. Residues 550-589 (LSQHHEELKEEDEEAEPEDNVQDKVDPKRQKTATDNITST) form a disordered region. The span at 558–569 (KEEDEEAEPEDN) shows a compositional bias: acidic residues.

This sequence belongs to the class I-like SAM-binding methyltransferase superfamily. Trm1 family.

The enzyme catalyses guanosine(26) in tRNA + 2 S-adenosyl-L-methionine = N(2)-dimethylguanosine(26) in tRNA + 2 S-adenosyl-L-homocysteine + 2 H(+). Dimethylates a single guanine residue at position 26 of most tRNAs using S-adenosyl-L-methionine as donor of the methyl groups. The protein is tRNA (guanine(26)-N(2))-dimethyltransferase 2 of Arabidopsis thaliana (Mouse-ear cress).